A 92-amino-acid chain; its full sequence is Signal peptidase complex subunit 1 (92 aa).

At 1-12 the chain is on the cytoplasmic side; that stretch reads MDWQGQKLVEQL. A helical transmembrane segment spans residues 13-30; sequence MQILLVISGVVAVVVGYT. Topologically, residues 31 to 36 are lumenal; it reads TESFRT. The chain crosses the membrane as a helical span at residues 37–59; it reads MMLIYAGGVVLTTLVTVPNWPFY. At 60 to 92 the chain is on the cytoplasmic side; that stretch reads NLHPLKWLDPSEAEKHPKPEVVSVASKKKFSKK. Residues 73–92 are disordered; that stretch reads EKHPKPEVVSVASKKKFSKK.

Belongs to the SPCS1 family. Component of the signal peptidase complex (SPC) composed of a catalytic subunit SEC11 and three accessory subunits SPCS1, SPCS2 and SPCS3. The complex induces a local thinning of the ER membrane which is used to measure the length of the signal peptide (SP) h-region of protein substrates. This ensures the selectivity of the complex towards h-regions shorter than 18-20 amino acids.

Its subcellular location is the endoplasmic reticulum membrane. Functionally, component of the signal peptidase complex (SPC) which catalyzes the cleavage of N-terminal signal sequences from nascent proteins as they are translocated into the lumen of the endoplasmic reticulum. Dispensable for SPC enzymatic activity. In Arabidopsis thaliana (Mouse-ear cress), this protein is Signal peptidase complex subunit 1.